The following is a 261-amino-acid chain: Cytochrome c oxidase subunit 3 (261 aa).

The Mitochondrial matrix segment spans residues 1–15 (MSHQAHAYHMVDPSP). The helical transmembrane segment at 16 to 34 (WPLTGAGAALLMTSGLAMW) threads the bilayer. Over 35–40 (FHKNSC) the chain is Mitochondrial intermembrane. Residues 41-66 (ILMTLGLILMLLTMYQWWRDIVREGT) form a helical membrane-spanning segment. At 67–72 (FLGHHT) the chain is on the mitochondrial matrix side. Residues 73–105 (SPVQQGLRYGMILFIISEVCFFAGFFWAFYHAS) traverse the membrane as a helical segment. At 106 to 128 (LAPTPELGLTWPPTGINPLNPFE) the chain is on the mitochondrial intermembrane side. The helical transmembrane segment at 129–152 (VPLLNTAVLLASGVSVTWAHHSIT) threads the bilayer. Residues 153-155 (EKN) lie on the Mitochondrial matrix side of the membrane. The chain crosses the membrane as a helical span at residues 156 to 183 (RTETTQALTLTVLLGLYFTALQIMEYYE). Topologically, residues 184 to 190 (TPFTMAD) are mitochondrial intermembrane. A helical membrane pass occupies residues 191–223 (GVYGSTFFVATGFHGLHVIIGSLFLLTCLLRHL). Over 224–232 (QYHFTSKHH) the chain is Mitochondrial matrix. A helical transmembrane segment spans residues 233–256 (FGFEAAAWYWHFVDVVWLFLYISI). The Mitochondrial intermembrane portion of the chain corresponds to 257–261 (YWWGS).

Belongs to the cytochrome c oxidase subunit 3 family. As to quaternary structure, component of the cytochrome c oxidase (complex IV, CIV), a multisubunit enzyme composed of 14 subunits. The complex is composed of a catalytic core of 3 subunits MT-CO1, MT-CO2 and MT-CO3, encoded in the mitochondrial DNA, and 11 supernumerary subunits COX4I, COX5A, COX5B, COX6A, COX6B, COX6C, COX7A, COX7B, COX7C, COX8 and NDUFA4, which are encoded in the nuclear genome. The complex exists as a monomer or a dimer and forms supercomplexes (SCs) in the inner mitochondrial membrane with NADH-ubiquinone oxidoreductase (complex I, CI) and ubiquinol-cytochrome c oxidoreductase (cytochrome b-c1 complex, complex III, CIII), resulting in different assemblies (supercomplex SCI(1)III(2)IV(1) and megacomplex MCI(2)III(2)IV(2)).

The protein localises to the mitochondrion inner membrane. It carries out the reaction 4 Fe(II)-[cytochrome c] + O2 + 8 H(+)(in) = 4 Fe(III)-[cytochrome c] + 2 H2O + 4 H(+)(out). Functionally, component of the cytochrome c oxidase, the last enzyme in the mitochondrial electron transport chain which drives oxidative phosphorylation. The respiratory chain contains 3 multisubunit complexes succinate dehydrogenase (complex II, CII), ubiquinol-cytochrome c oxidoreductase (cytochrome b-c1 complex, complex III, CIII) and cytochrome c oxidase (complex IV, CIV), that cooperate to transfer electrons derived from NADH and succinate to molecular oxygen, creating an electrochemical gradient over the inner membrane that drives transmembrane transport and the ATP synthase. Cytochrome c oxidase is the component of the respiratory chain that catalyzes the reduction of oxygen to water. Electrons originating from reduced cytochrome c in the intermembrane space (IMS) are transferred via the dinuclear copper A center (CU(A)) of subunit 2 and heme A of subunit 1 to the active site in subunit 1, a binuclear center (BNC) formed by heme A3 and copper B (CU(B)). The BNC reduces molecular oxygen to 2 water molecules using 4 electrons from cytochrome c in the IMS and 4 protons from the mitochondrial matrix. The polypeptide is Cytochrome c oxidase subunit 3 (MT-CO3) (Petromyzon marinus (Sea lamprey)).